Here is a 318-residue protein sequence, read N- to C-terminus: Olfactory receptor 5M5 (318 aa).

Residues 1–31 (MLAPKKMVRGNYSMVTEFILLGLTDRPELQP) lie on the Extracellular side of the membrane. N-linked (GlcNAc...) asparagine glycosylation is present at Asn-11. A helical membrane pass occupies residues 32-52 (LLFVLFLVIYLITVGGNLGMM). At 53–60 (VLIRIDSR) the chain is on the cytoplasmic side. Residues 61–81 (LHTPMYYFLASLSCLDLCYST) traverse the membrane as a helical segment. Residues 82-105 (NVTPKMLVNFLSEKKTISYAACLV) are Extracellular-facing. Cysteines 103 and 195 form a disulfide. The helical transmembrane segment at 106 to 126 (QCYFFIAMVITEYYMLAVMAY) threads the bilayer. Residues 127 to 139 (DRYMAICNPLLYS) are Cytoplasmic-facing. The helical transmembrane segment at 140 to 160 (SKMSKGVCVRLIAGPYIYGFL) threads the bilayer. Over 161–202 (SGLMETMWTYRLTFCGSNIINHFYCADPPLIRLSCSDTFIKE) the chain is Extracellular. The helical transmembrane segment at 203 to 223 (TSMFVVAGFNLSNSLFIILIS) threads the bilayer. The Cytoplasmic segment spans residues 224 to 243 (YLFILIAILRMRSAEGRRKA). The helical transmembrane segment at 244-264 (FSTCGSHLVAVTVFYGTLFCM) threads the bilayer. The Extracellular portion of the chain corresponds to 265-277 (YVRPPTDKSVEQS). Residues 278–298 (KIIAVFYTFVSPMLNPIIYSL) form a helical membrane-spanning segment. The Cytoplasmic segment spans residues 299–318 (RNKDVKHAFWKLVRRNVLSK).

It belongs to the G-protein coupled receptor 1 family.

The protein localises to the cell membrane. In terms of biological role, potential odorant receptor. The sequence is that of Olfactory receptor 5M5 from Mus musculus (Mouse).